The primary structure comprises 455 residues: Argininosuccinate lyase (455 aa).

It belongs to the lyase 1 family. Argininosuccinate lyase subfamily.

The protein localises to the cytoplasm. It catalyses the reaction 2-(N(omega)-L-arginino)succinate = fumarate + L-arginine. It participates in amino-acid biosynthesis; L-arginine biosynthesis; L-arginine from L-ornithine and carbamoyl phosphate: step 3/3. The protein is Argininosuccinate lyase of Caulobacter vibrioides (strain ATCC 19089 / CIP 103742 / CB 15) (Caulobacter crescentus).